Reading from the N-terminus, the 235-residue chain is Large ribosomal subunit protein uL1 (235 aa).

The protein belongs to the universal ribosomal protein uL1 family. In terms of assembly, part of the 50S ribosomal subunit.

Functionally, binds directly to 23S rRNA. The L1 stalk is quite mobile in the ribosome, and is involved in E site tRNA release. Protein L1 is also a translational repressor protein, it controls the translation of the L11 operon by binding to its mRNA. The sequence is that of Large ribosomal subunit protein uL1 from Mycobacterium leprae (strain Br4923).